We begin with the raw amino-acid sequence, 477 residues long: Proline--tRNA ligase (477 aa).

This sequence belongs to the class-II aminoacyl-tRNA synthetase family. ProS type 3 subfamily. In terms of assembly, homodimer.

It is found in the cytoplasm. The enzyme catalyses tRNA(Pro) + L-proline + ATP = L-prolyl-tRNA(Pro) + AMP + diphosphate. Its function is as follows. Catalyzes the attachment of proline to tRNA(Pro) in a two-step reaction: proline is first activated by ATP to form Pro-AMP and then transferred to the acceptor end of tRNA(Pro). This Lachnoclostridium phytofermentans (strain ATCC 700394 / DSM 18823 / ISDg) (Clostridium phytofermentans) protein is Proline--tRNA ligase.